The following is a 122-amino-acid chain: Large ribosomal subunit protein uL14 (122 aa).

This sequence belongs to the universal ribosomal protein uL14 family. Part of the 50S ribosomal subunit. Forms a cluster with proteins L3 and L19. In the 70S ribosome, L14 and L19 interact and together make contacts with the 16S rRNA in bridges B5 and B8.

Functionally, binds to 23S rRNA. Forms part of two intersubunit bridges in the 70S ribosome. The chain is Large ribosomal subunit protein uL14 from Laribacter hongkongensis (strain HLHK9).